The chain runs to 609 residues: All-trans-retinol 13,14-reductase (609 aa).

The first 21 residues, 1 to 21 (MWITALLLVVLLLVVVHRVYV), serve as a signal peptide directing secretion.

The protein belongs to the carotenoid/retinoid oxidoreductase family. CrtISO subfamily. The cofactor is NAD(+). Requires NADP(+) as cofactor. It depends on FAD as a cofactor. Highly expressed in liver, kidney and heart.

It is found in the endoplasmic reticulum membrane. The catalysed reaction is all-trans-13,14-dihydroretinol + A = all-trans-retinol + AH2. In terms of biological role, catalyzes the saturation of all-trans-retinol to all-trans-13,14-dihydroretinol. Does not exhibit any activity toward all-trans-retinoic acid, nor 9-cis, 11-cis or 13-cis-retinol isomers. May play a role in the metabolism of vitamin A. Independently of retinol conversion, may regulate liver metabolism upstream of MLXIPL/ChREBP. May play a role in adipocyte differentiation. In Rattus norvegicus (Rat), this protein is All-trans-retinol 13,14-reductase (Retsat).